Consider the following 473-residue polypeptide: Aspartyl/glutamyl-tRNA(Asn/Gln) amidotransferase subunit B (473 aa).

The protein belongs to the GatB/GatE family. GatB subfamily. As to quaternary structure, heterotrimer of A, B and C subunits.

The enzyme catalyses L-glutamyl-tRNA(Gln) + L-glutamine + ATP + H2O = L-glutaminyl-tRNA(Gln) + L-glutamate + ADP + phosphate + H(+). It carries out the reaction L-aspartyl-tRNA(Asn) + L-glutamine + ATP + H2O = L-asparaginyl-tRNA(Asn) + L-glutamate + ADP + phosphate + 2 H(+). Functionally, allows the formation of correctly charged Asn-tRNA(Asn) or Gln-tRNA(Gln) through the transamidation of misacylated Asp-tRNA(Asn) or Glu-tRNA(Gln) in organisms which lack either or both of asparaginyl-tRNA or glutaminyl-tRNA synthetases. The reaction takes place in the presence of glutamine and ATP through an activated phospho-Asp-tRNA(Asn) or phospho-Glu-tRNA(Gln). This is Aspartyl/glutamyl-tRNA(Asn/Gln) amidotransferase subunit B from Francisella tularensis subsp. mediasiatica (strain FSC147).